Consider the following 60-residue polypeptide: Phospholipase A2 (60 aa).

Ca(2+) is bound by residues Y27, G29, and G31. C28 and C44 are disulfide-bonded. The active site involves H47. D48 contributes to the Ca(2+) binding site.

Requires Ca(2+) as cofactor. As to expression, expressed by the venom gland.

It is found in the secreted. It carries out the reaction a 1,2-diacyl-sn-glycero-3-phosphocholine + H2O = a 1-acyl-sn-glycero-3-phosphocholine + a fatty acid + H(+). In terms of biological role, snake venom phospholipase A2 (PLA2) that displays mild but significant inhibition of mouse platelet aggregation induced by ADP and collagen. In vivo, induces edema in the foot pads and gastrocnemius muscles of mice but shows no myonecrotic or myotoxic activity. PA2 catalyzes the calcium-dependent hydrolysis of the 2-acyl groups in 3-sn-phosphoglycerides. The protein is Phospholipase A2 of Lachesis muta rhombeata (Bushmaster).